Consider the following 479-residue polypeptide: MLSEKQGEETMMSSLNETIELNEEREEEKGASPGSGFKNFLWHGGSVYDAWFSCASNQVAQVLLTLPYSFSQLGMISGIIFQVFYGLMGSWTAYLISILYVEYRSRKEKENVSFKNHVIQWFEVLEGLLGPYWKAIGLAFNCTFLLFGSVIQLIACASNIYYINDHLDKRTWTYIFGACCATTVFIPSFHNYRIWSFLGLGMTTYTAWYMTIAAIVHGQVENVVHSGPKKMVWYFTGATNILYTFGGHAVTVEIMHAMWKPQKFKAIYFFATLYVFTLTLPSAIAVYWAFGDQLLDHSNAFSLLPRNAWRDAGVILMLIHQFITFGFACTPLYFVWEKVIGMHDTKSIFLRALARLPVVIPIWFLAIIFPFFGPINSAVGALLVSFTVYVIPASAHMLTYRSASARQNAAEKLPKVIPSWTLMYVINAFVVIWVTIVGFGFGGWASMTNFIKQVDTFGLFAKCYQCPPKLPASNHTMHH.

The Cytoplasmic segment spans residues 1–58 (MLSEKQGEETMMSSLNETIELNEEREEEKGASPGSGFKNFLWHGGSVYDAWFSCASNQ). Residues 59-76 (VAQVLLTLPYSFSQLGMI) form a helical membrane-spanning segment. The Extracellular portion of the chain corresponds to 77-78 (SG). The chain crosses the membrane as a helical span at residues 79–99 (IIFQVFYGLMGSWTAYLISIL). Residues 100–134 (YVEYRSRKEKENVSFKNHVIQWFEVLEGLLGPYWK) lie on the Cytoplasmic side of the membrane. The helical transmembrane segment at 135–155 (AIGLAFNCTFLLFGSVIQLIA) threads the bilayer. The Extracellular segment spans residues 156–171 (CASNIYYINDHLDKRT). The chain crosses the membrane as a helical span at residues 172–192 (WTYIFGACCATTVFIPSFHNY). Over 193-195 (RIW) the chain is Cytoplasmic. Residues 196–216 (SFLGLGMTTYTAWYMTIAAIV) traverse the membrane as a helical segment. Over 217-231 (HGQVENVVHSGPKKM) the chain is Extracellular. A helical membrane pass occupies residues 232–252 (VWYFTGATNILYTFGGHAVTV). At 253–265 (EIMHAMWKPQKFK) the chain is on the cytoplasmic side. A helical membrane pass occupies residues 266 to 286 (AIYFFATLYVFTLTLPSAIAV). Residues 287-313 (YWAFGDQLLDHSNAFSLLPRNAWRDAG) lie on the Extracellular side of the membrane. The chain crosses the membrane as a helical span at residues 314 to 334 (VILMLIHQFITFGFACTPLYF). Residues 335–355 (VWEKVIGMHDTKSIFLRALAR) are Cytoplasmic-facing. Residues 356-376 (LPVVIPIWFLAIIFPFFGPIN) form a helical membrane-spanning segment. A topological domain (extracellular) is located at residue Ser-377. A helical membrane pass occupies residues 378–398 (AVGALLVSFTVYVIPASAHML). Residues 399-421 (TYRSASARQNAAEKLPKVIPSWT) are Cytoplasmic-facing. The chain crosses the membrane as a helical span at residues 422 to 442 (LMYVINAFVVIWVTIVGFGFG). The Extracellular portion of the chain corresponds to 443–479 (GWASMTNFIKQVDTFGLFAKCYQCPPKLPASNHTMHH). A glycan (N-linked (GlcNAc...) asparagine) is linked at Asn-474.

Belongs to the amino acid/polyamine transporter 2 family. Amino acid/auxin permease (AAAP) (TC 2.A.18.1) subfamily. Shoots and roots of nodulating plants. Higher levels in roots, flowers and stems, lower in nodules, leaves, petioles and shoot apices.

It is found in the cell membrane. Functionally, carrier protein involved in proton-driven auxin influx. Mediates the formation of auxin gradient from developing leaves (site of auxin biosynthesis) to tips by contributing to the loading of auxin in vascular tissues and facilitating acropetal (base to tip) auxin transport within inner tissues of the root apex, and basipetal (tip to base) auxin transport within outer tissues of the root apex. May be involved in lateral roots and nodules formation. The protein is Auxin transporter-like protein 1 (LAX1) of Medicago truncatula (Barrel medic).